The sequence spans 108 residues: UPF0060 membrane protein YnfA (108 aa).

Over 1–5 (MLKTT) the chain is Periplasmic. A helical transmembrane segment spans residues 6–26 (LLFFVTALCEIIGCFLPWLWI). The Cytoplasmic segment spans residues 27-30 (KRGA). Residues 31 to 51 (SVWWLLPAAASLALFVWLLTL) traverse the membrane as a helical segment. Topologically, residues 52–60 (HPAASGRVY) are periplasmic. The helical transmembrane segment at 61–81 (AAYGGVYVCTALLWLRVVDGV) threads the bilayer. Over 82–84 (RLT) the chain is Cytoplasmic. Residues 85–105 (VYDWCGALIALCGMLIIVVGW) traverse the membrane as a helical segment. The Periplasmic segment spans residues 106–108 (GRT).

The protein belongs to the UPF0060 family.

The protein resides in the cell inner membrane. In Salmonella paratyphi A (strain ATCC 9150 / SARB42), this protein is UPF0060 membrane protein YnfA.